A 758-amino-acid polypeptide reads, in one-letter code: Relaxin receptor 1 (758 aa).

Over 1-409 (MTSGPFFFCI…ENLLASIIQR (409 aa)) the chain is Extracellular. Positions 26–63 (SCPLGSFPCGNMSRCLPQLLHCNGVDDCGNRADEDHCG) constitute an LDL-receptor class A domain. Disulfide bonds link Cys27–Cys40, Cys34–Cys53, and Cys47–Cys62. The N-linked (GlcNAc...) asparagine glycan is linked to Asn36. Ca(2+)-binding residues include Leu45, Asn48, Val50, Asp52, Asp58, and Glu59. Asn127 carries N-linked (GlcNAc...) asparagine glycosylation. LRR repeat units lie at residues 127–148 (NVTV…GFRK), 151–172 (ELQK…AFRG), 175–196 (SLTK…VFED), 199–220 (RLEW…TFYG), 223–244 (SLIL…PLCQ), 248–269 (RLHW…TFIS), 272–293 (NLTV…AFTH), 296–317 (KLDE…IFKD), 320–341 (ELSQ…QFDC), and 344–365 (KLKS…MFRP). 2 N-linked (GlcNAc...) asparagine glycosylation sites follow: Asn264 and Asn272. Residue Asn325 is glycosylated (N-linked (GlcNAc...) asparagine). Asn368 is a glycosylation site (N-linked (GlcNAc...) asparagine). The helical transmembrane segment at 410–430 (VFVWVVSAITCFGNIFVICMR) threads the bilayer. The Cytoplasmic portion of the chain corresponds to 431–443 (PYIRSENKLHAMS). Residues 444 to 464 (IISLCCADCLMGVYLFVIGAF) traverse the membrane as a helical segment. The Extracellular segment spans residues 465 to 486 (DLKFRGEYNKHAQPWMESVHCQ). Cys485 and Cys563 are joined by a disulfide. The helical transmembrane segment at 487-507 (FMGSLAILSTEVSVLLLTFLT) threads the bilayer. The Cytoplasmic portion of the chain corresponds to 508–527 (LEKYICIVYPFRCLRPRKCR). A helical transmembrane segment spans residues 528-548 (TITVLIFIWIIGFIVAFAPLG). Over 549–577 (NKEFFKNYYGTNGVCFPLHSEDTGSTGAQ) the chain is Extracellular. The chain crosses the membrane as a helical span at residues 578 to 598 (IYSVVIFLGINLVAFIIIVFS). At 599–629 (YGSMFYSVHQSSVTVTEIQKQVKKEVVLAKR) the chain is on the cytoplasmic side. Residues 630–650 (FFFIVFTDALCWIPIFILKFL) form a helical membrane-spanning segment. Position 651 (Ser651) is a topological domain, extracellular. A helical membrane pass occupies residues 652-672 (LLQVEIPDSITSWVVIFILPI). Topologically, residues 673–758 (NSALNPIIYT…SQSSRLNSYS (86 aa)) are cytoplasmic.

It belongs to the G-protein coupled receptor 1 family. In terms of assembly, interacts with C1QTNF8.

The protein localises to the cell membrane. In terms of biological role, receptor for relaxins. The activity of this receptor is mediated by G proteins leading to stimulation of adenylate cyclase and an increase of cAMP. Binding of the ligand may also activate a tyrosine kinase pathway that inhibits the activity of a phosphodiesterase that degrades cAMP. The polypeptide is Relaxin receptor 1 (Rxfp1) (Mus musculus (Mouse)).